The following is a 335-amino-acid chain: Urokinase plasminogen activator surface receptor (335 aa).

A signal peptide spans 1–22 (MGHPLLLPLLLLLHTCVPASWG). UPAR/Ly6 domains lie at 23 to 114 (LRCM…RSRY), 115 to 213 (LECI…PQNG), and 214 to 305 (HQCY…YRKG). 3 cysteine pairs are disulfide-bonded: Cys25–Cys46, Cys28–Cys34, and Cys39–Cys67. The N-linked (GlcNAc...) asparagine glycan is linked to Asn74. 11 disulfide bridges follow: Cys93–Cys98, Cys117–Cys144, Cys120–Cys127, Cys137–Cys169, Cys175–Cys192, Cys193–Cys198, Cys216–Cys244, Cys219–Cys227, Cys237–Cys263, Cys269–Cys287, and Cys288–Cys293. N-linked (GlcNAc...) asparagine glycans are attached at residues Asn184, Asn194, Asn222, and Asn255. The GPI-anchor amidated glycine moiety is linked to residue Gly305. Positions 306–335 (AAPQPGPAHLSLTITLLMTARLWGGTLLWT) are cleaved as a propeptide — removed in mature form.

As to quaternary structure, monomer. Interacts (via the UPAR/Ly6 domains) with SRPX2. Interacts with MRC2. Interacts with FAP (seprase); the interaction occurs at the cell surface of invadopodia membrane. Interacts with SORL1 (via N-terminal ectodomain); this interaction decreases PLAUR internalization. The ternary complex composed of PLAUR-PLAU-SERPINE1 also interacts with SORL1.

The protein localises to the cell membrane. It localises to the cell projection. It is found in the invadopodium membrane. Its function is as follows. Acts as a receptor for urokinase plasminogen activator. Plays a role in localizing and promoting plasmin formation. Mediates the proteolysis-independent signal transduction activation effects of U-PA. It is subject to negative-feedback regulation by U-PA which cleaves it into an inactive form. In Chlorocebus aethiops (Green monkey), this protein is Urokinase plasminogen activator surface receptor (PLAUR).